Reading from the N-terminus, the 430-residue chain is Protein arginine methyltransferase NDUFAF7, mitochondrial (430 aa).

A mitochondrion-targeting transit peptide spans 1 to 31; it reads MSGLARLRKTAFLMVSASANCRIQRYQSSRT.

Belongs to the NDUFAF7 family.

It localises to the mitochondrion. It carries out the reaction L-arginyl-[protein] + 2 S-adenosyl-L-methionine = N(omega),N(omega)'-dimethyl-L-arginyl-[protein] + 2 S-adenosyl-L-homocysteine + 2 H(+). Its function is as follows. Arginine methyltransferase involved in the assembly or stability of mitochondrial NADH:ubiquinone oxidoreductase complex (complex I). Acts by mediating symmetric dimethylation of 'Arg-118' of ndufs2 after it assembles into the complex I, stabilizing the early intermediate complex. This Xenopus tropicalis (Western clawed frog) protein is Protein arginine methyltransferase NDUFAF7, mitochondrial.